Here is a 252-residue protein sequence, read N- to C-terminus: Carboxymethylenebutenolidase (252 aa).

Residues 1–28 (MCHNKSSAPPTPAHISIQQNRTPGTDPV) form a disordered region. Catalysis depends on residues cysteine 126, aspartate 183, and histidine 214.

Belongs to the dienelactone hydrolase family.

The enzyme catalyses 2-(5-oxo-2,5-dihydrofuran-2-ylidene)acetate + H2O = 4-oxohex-2-enedioate + H(+). The protein operates within aromatic compound metabolism; 3-chlorocatechol degradation. Functionally, ring cleavage of cyclic ester dienelactone to produce maleylacetate. In Rhodococcus opacus (Nocardia opaca), this protein is Carboxymethylenebutenolidase (clcD).